The following is a 500-amino-acid chain: Probable malate:quinone oxidoreductase (500 aa).

Belongs to the MQO family. FAD serves as cofactor.

It carries out the reaction (S)-malate + a quinone = a quinol + oxaloacetate. Its pathway is carbohydrate metabolism; tricarboxylic acid cycle; oxaloacetate from (S)-malate (quinone route): step 1/1. The protein is Probable malate:quinone oxidoreductase of Corynebacterium aurimucosum (strain ATCC 700975 / DSM 44827 / CIP 107346 / CN-1) (Corynebacterium nigricans).